Consider the following 635-residue polypeptide: Threonine--tRNA ligase (635 aa).

The TGS domain maps to 1-61 (MIKITLKDGK…HKDSSLEILT (61 aa)). Residues 242 to 532 (DHRKLGKELD…LIEQYAGAFP (291 aa)) form a catalytic region. C333, H384, and H509 together coordinate Zn(2+).

Belongs to the class-II aminoacyl-tRNA synthetase family. In terms of assembly, homodimer. It depends on Zn(2+) as a cofactor.

The protein resides in the cytoplasm. The catalysed reaction is tRNA(Thr) + L-threonine + ATP = L-threonyl-tRNA(Thr) + AMP + diphosphate + H(+). Functionally, catalyzes the attachment of threonine to tRNA(Thr) in a two-step reaction: L-threonine is first activated by ATP to form Thr-AMP and then transferred to the acceptor end of tRNA(Thr). Also edits incorrectly charged L-seryl-tRNA(Thr). This Clostridium botulinum (strain Langeland / NCTC 10281 / Type F) protein is Threonine--tRNA ligase.